A 250-amino-acid chain; its full sequence is 2,3-bisphosphoglycerate-dependent phosphoglycerate mutase (250 aa).

Residues 10–17, 23–24, R62, 89–92, K100, 116–117, and 185–186 each bind substrate; these read RHGESEWN, TG, ERHY, RR, and GN. H11 serves as the catalytic Tele-phosphohistidine intermediate. The active-site Proton donor/acceptor is the E89.

This sequence belongs to the phosphoglycerate mutase family. BPG-dependent PGAM subfamily. Homodimer.

It carries out the reaction (2R)-2-phosphoglycerate = (2R)-3-phosphoglycerate. Its pathway is carbohydrate degradation; glycolysis; pyruvate from D-glyceraldehyde 3-phosphate: step 3/5. Its function is as follows. Catalyzes the interconversion of 2-phosphoglycerate and 3-phosphoglycerate. The chain is 2,3-bisphosphoglycerate-dependent phosphoglycerate mutase from Edwardsiella ictaluri (strain 93-146).